Consider the following 545-residue polypeptide: MTAKDILFDAEARTKLKVGVDKLANAVKVTLGPAGRNVLIDKKFGAPTSTKDGVTVAKEIELVDPVENMGAQMVREVASKTSDVAGDGTTTATVLAQAIYREGLKNVTAGARPIDLKRGIDRAVKEVVAELRNISRSISGKKEIAQVGTISANNDPEIGELIAEAMDKVGKDGVITVEEAKGMETELKVVEGMQFDRGYLSPYFVTNSETMEAELDEALILIHDKKISNMKELLPILEKAAQSGRPLLIIAEDIEGEALATLVVNKLRGTLKVAAVKAPGFGDRRKAMLEDIAILTGGTVISEEKGYKLENATMAYLGQAARITIDKDNTTIVEGKGKQEEIKARINEIKGQIEKSTSDYDTEKLQERLAKLSGGVAVLKIGASTEVEMKEKKARVEDALHATRAAVQEGIVVGGGVALIRAAKGLAKAVADNEDQKTGIEIIRRALEEPLRQIVANTGTTDGAVVLEKVKNAEGDYGFNARTEQYENLIEAGVVDPTKVTRSALENAASVASILLTTEAAITDVKEDKADMPAMPPGGMGGGMY.

ATP contacts are provided by residues 30 to 33, lysine 51, 87 to 91, glycine 415, and aspartate 496; these read TLGP and DGTTT.

This sequence belongs to the chaperonin (HSP60) family. In terms of assembly, forms a cylinder of 14 subunits composed of two heptameric rings stacked back-to-back. Interacts with the co-chaperonin GroES.

It localises to the cytoplasm. It carries out the reaction ATP + H2O + a folded polypeptide = ADP + phosphate + an unfolded polypeptide.. In terms of biological role, together with its co-chaperonin GroES, plays an essential role in assisting protein folding. The GroEL-GroES system forms a nano-cage that allows encapsulation of the non-native substrate proteins and provides a physical environment optimized to promote and accelerate protein folding. This is Chaperonin GroEL from Chlorobaculum tepidum (strain ATCC 49652 / DSM 12025 / NBRC 103806 / TLS) (Chlorobium tepidum).